Here is a 95-residue protein sequence, read N- to C-terminus: Large ribosomal subunit protein uL23 (95 aa).

It belongs to the universal ribosomal protein uL23 family. Part of the 50S ribosomal subunit. Contacts protein L29, and trigger factor when it is bound to the ribosome.

One of the early assembly proteins it binds 23S rRNA. One of the proteins that surrounds the polypeptide exit tunnel on the outside of the ribosome. Forms the main docking site for trigger factor binding to the ribosome. The polypeptide is Large ribosomal subunit protein uL23 (Syntrophotalea carbinolica (strain DSM 2380 / NBRC 103641 / GraBd1) (Pelobacter carbinolicus)).